A 144-amino-acid polypeptide reads, in one-letter code: Globin (144 aa).

Ala1 is modified (N-acetylalanine). A Globin domain is found at 1–144; the sequence is ALSAADAGLL…IISALQSAGK (144 aa). Heme b is bound at residue His95.

This sequence belongs to the globin family. In terms of assembly, monomer.

The protein is Globin of Aplysia juliana (Walking sea hare).